The following is a 583-amino-acid chain: Leucine aminopeptidase 2, chloroplastic (583 aa).

The N-terminal 70 residues, 1-70 (MAVTLVTSFA…ISHATLGLTQ (70 aa)), are a transit peptide targeting the chloroplast. 2 residues coordinate Mn(2+): lysine 351 and aspartate 356. Lysine 363 is a catalytic residue. Mn(2+) is bound by residues aspartate 376, aspartate 436, and glutamate 438. Arginine 440 is a catalytic residue.

It belongs to the peptidase M17 family. In terms of assembly, homohexamer (dimer of homotrimers). Mn(2+) is required as a cofactor.

The protein localises to the plastid. Its subcellular location is the chloroplast. The catalysed reaction is Release of an N-terminal amino acid, Xaa-|-Yaa-, in which Xaa is preferably Leu, but may be other amino acids including Pro although not Arg or Lys, and Yaa may be Pro. Amino acid amides and methyl esters are also readily hydrolyzed, but rates on arylamides are exceedingly low.. The enzyme catalyses Release of N-terminal proline from a peptide.. In terms of biological role, presumably involved in the processing and regular turnover of intracellular proteins. Catalyzes the removal of unsubstituted N-terminal amino acids from various peptides. Possesses leucine aminopeptidase activity against the model substrate leucine-amido methyl coumarin. Does not seem to possess Cys-Gly dipeptidase activity. Functionally, functions as a molecular chaperone to protect proteins from heat-induced damage. The protein is Leucine aminopeptidase 2, chloroplastic of Arabidopsis thaliana (Mouse-ear cress).